Reading from the N-terminus, the 319-residue chain is Mitochondrial fission regulator 1-like (319 aa).

A disordered region spans residues 1 to 35 (MASLGAGAEPESVLFGKDGTEACESPEGRRSGRRK).

Belongs to the MTFR1 family.

It localises to the mitochondrion outer membrane. Its function is as follows. Mitochondrial protein required for adaptation of miochondrial dynamics to metabolic changes. Regulates mitochondrial morphology at steady state and mediates AMPK-dependent stress-induced mitochondrial fragmentation via the control of OPA1 levels. The chain is Mitochondrial fission regulator 1-like (mtfr1l) from Xenopus tropicalis (Western clawed frog).